Reading from the N-terminus, the 631-residue chain is Phosphomethylpyrimidine synthase (631 aa).

Substrate-binding positions include Asn239, Met268, Tyr297, His333, Ser353 to Gly355, Asp394 to Arg397, and Glu433. His437 provides a ligand contact to Zn(2+). Substrate is bound at residue Tyr460. His501 is a Zn(2+) binding site. [4Fe-4S] cluster contacts are provided by Cys581, Cys584, and Cys589.

This sequence belongs to the ThiC family. Homodimer. Requires [4Fe-4S] cluster as cofactor.

It catalyses the reaction 5-amino-1-(5-phospho-beta-D-ribosyl)imidazole + S-adenosyl-L-methionine = 4-amino-2-methyl-5-(phosphooxymethyl)pyrimidine + CO + 5'-deoxyadenosine + formate + L-methionine + 3 H(+). The protein operates within cofactor biosynthesis; thiamine diphosphate biosynthesis. In terms of biological role, catalyzes the synthesis of the hydroxymethylpyrimidine phosphate (HMP-P) moiety of thiamine from aminoimidazole ribotide (AIR) in a radical S-adenosyl-L-methionine (SAM)-dependent reaction. The protein is Phosphomethylpyrimidine synthase of Escherichia coli O81 (strain ED1a).